We begin with the raw amino-acid sequence, 368 residues long: Flavanone 3-dioxygenase (368 aa).

Positions 191–295 (CVDMDQKVIV…RMSIATFQNP (105 aa)) constitute a Fe2OG dioxygenase domain. 3 residues coordinate Fe cation: His218, Asp220, and His276. Arg286 provides a ligand contact to 2-oxoglutarate.

The protein belongs to the iron/ascorbate-dependent oxidoreductase family. It depends on Fe(2+) as a cofactor. The cofactor is L-ascorbate.

The catalysed reaction is a (2S)-flavan-4-one + 2-oxoglutarate + O2 = a (2R,3R)-dihydroflavonol + succinate + CO2. Its pathway is secondary metabolite biosynthesis; flavonoid biosynthesis. Its function is as follows. Involved in the conversion of (2S)-naringenin to (+)-(2R/3R)-dihydrokaempferol. This chain is Flavanone 3-dioxygenase (FHT), found in Petroselinum crispum (Parsley).